A 624-amino-acid chain; its full sequence is Chaperone protein DnaK (624 aa).

The residue at position 174 (T174) is a Phosphothreonine; by autocatalysis. Disordered regions lie at residues 470–504 (ITIK…KEEV) and 577–624 (NGGA…DPDK). The span at 481-504 (EEIKKMQKDAEEHAEEDKKRKEEV) shows a compositional bias: basic and acidic residues. Residues 577-605 (NGGAQGAAGQAGPQGPQNGGQPNNDNGSD) show a composition bias toward low complexity. Basic and acidic residues predominate over residues 615 to 624 (GDFHKVDPDK).

Belongs to the heat shock protein 70 family.

In terms of biological role, acts as a chaperone. The sequence is that of Chaperone protein DnaK from Lactobacillus johnsonii (strain CNCM I-12250 / La1 / NCC 533).